The chain runs to 405 residues: Tryptophan synthase beta chain (405 aa).

Lys-98 is modified (N6-(pyridoxal phosphate)lysine).

This sequence belongs to the TrpB family. In terms of assembly, tetramer of two alpha and two beta chains. Requires pyridoxal 5'-phosphate as cofactor.

The enzyme catalyses (1S,2R)-1-C-(indol-3-yl)glycerol 3-phosphate + L-serine = D-glyceraldehyde 3-phosphate + L-tryptophan + H2O. Its pathway is amino-acid biosynthesis; L-tryptophan biosynthesis; L-tryptophan from chorismate: step 5/5. Its function is as follows. The beta subunit is responsible for the synthesis of L-tryptophan from indole and L-serine. The sequence is that of Tryptophan synthase beta chain from Stenotrophomonas maltophilia (strain R551-3).